The chain runs to 281 residues: Transcription factor E2F6 (281 aa).

Lys9 is covalently cross-linked (Glycyl lysine isopeptide (Lys-Gly) (interchain with G-Cter in SUMO2)). Residues 50–129 mediate DNA binding; that stretch reads YVSMRKALKV…SKNHIRWIGS (80 aa). A DEF box motif is present at residues 95–129; that stretch reads KLGVRKRRVYDITNVLDGIDLVEKKSKNHIRWIGS. Residues 130-222 form a dimerization region; it reads DLSNFGAVPQ…PAPREDSITV (93 aa). Residues 143 to 164 form a leucine-zipper region; that stretch reads LQEELSDLSAMEDALDELIKDC. The transcription repression stretch occupies residues 173-281; sequence DDKENERLAY…QSEELLEVSN (109 aa). The segment at 241–281 is disordered; sequence GQTSNKRSEGVGTSSSESTHPEGPEEEENPQQSEELLEVSN.

The protein belongs to the E2F/DP family. In terms of assembly, forms heterodimers with DP family members TFDP1 or TFDP2. Component of the DRTF1/E2F transcription factor complex. Part of the E2F6.com-1 complex in G0 phase composed of E2F6, MGA, MAX, TFDP1, CBX3, BAT8, EUHMTASE1, RING1, RNF2, MBLR, L3MBTL2 and YAF2. Component of some MLL1/MLL complex, at least composed of the core components KMT2A/MLL1, ASH2L, HCFC1/HCF1, WDR5 and RBBP5, as well as the facultative components BACC1, CHD8, E2F6, HSP70, INO80C, KANSL1, LAS1L, MAX, MCRS1, MGA, KAT8/MOF, PELP1, PHF20, PRP31, RING2, RUVB1/TIP49A, RUVB2/TIP49B, SENP3, TAF1, TAF4, TAF6, TAF7, TAF9 and TEX10. In terms of tissue distribution, expressed in all tissues examined. Highest levels in placenta, skeletal muscle, heart, ovary, kidney, small intestine and spleen.

The protein localises to the nucleus. In terms of biological role, inhibitor of E2F-dependent transcription. Binds DNA cooperatively with DP proteins through the E2 recognition site, 5'-TTTC[CG]CGC-3'. Has a preference for the 5'-TTTCCCGC-3' E2F recognition site. E2F6 lacks the transcriptional activation and pocket protein binding domains. Appears to regulate a subset of E2F-dependent genes whose products are required for entry into the cell cycle but not for normal cell cycle progression. Represses expression of some meiosis-specific genes, including SLC25A31/ANT4. May silence expression via the recruitment of a chromatin remodeling complex containing histone H3-K9 methyltransferase activity. Overexpression delays the exit of cells from the S-phase. This chain is Transcription factor E2F6, found in Homo sapiens (Human).